Consider the following 382-residue polypeptide: Protein-arginine rhamnosyltransferase (382 aa).

DTDP-beta-L-rhamnose-binding positions include 17 to 20, Tyr-187, Gln-252, and 268 to 272; these read NFGD and RGEDS. The active-site Proton acceptor is Asp-20. The active site involves Glu-270.

The protein belongs to the glycosyltransferase 104 family.

The enzyme catalyses dTDP-beta-L-rhamnose + L-arginyl-[protein] = N(omega)-(alpha-L-rhamnosyl)-L-arginyl-[protein] + dTDP + H(+). Protein-arginine rhamnosyltransferase that catalyzes the transfer of a single rhamnose to elongation factor P (EF-P) on 'Lys-32', a modification required for EF-P-dependent rescue of polyproline stalled ribosomes. The polypeptide is Protein-arginine rhamnosyltransferase (Neisseria meningitidis).